The sequence spans 142 residues: ATP synthase epsilon chain (142 aa).

The protein belongs to the ATPase epsilon chain family. In terms of assembly, F-type ATPases have 2 components, CF(1) - the catalytic core - and CF(0) - the membrane proton channel. CF(1) has five subunits: alpha(3), beta(3), gamma(1), delta(1), epsilon(1). CF(0) has three main subunits: a, b and c.

It is found in the cell inner membrane. In terms of biological role, produces ATP from ADP in the presence of a proton gradient across the membrane. The sequence is that of ATP synthase epsilon chain from Shewanella halifaxensis (strain HAW-EB4).